We begin with the raw amino-acid sequence, 278 residues long: Polyamine aminopropyltransferase (278 aa).

In terms of domain architecture, PABS spans 3–240; it reads EGWFTEAVED…GWWSATLMVN (238 aa). Gln-33 lines the S-methyl-5'-thioadenosine pocket. Spermidine-binding residues include His-64 and Asp-88. S-methyl-5'-thioadenosine-binding positions include Glu-108 and 139–140; that span reads DG. Asp-158 acts as the Proton acceptor in catalysis. Position 158–161 (158–161) interacts with spermidine; it reads DSTD. An S-methyl-5'-thioadenosine-binding site is contributed by Pro-165.

This sequence belongs to the spermidine/spermine synthase family. As to quaternary structure, homodimer or homotetramer.

The protein localises to the cytoplasm. The enzyme catalyses S-adenosyl 3-(methylsulfanyl)propylamine + putrescine = S-methyl-5'-thioadenosine + spermidine + H(+). It functions in the pathway amine and polyamine biosynthesis; spermidine biosynthesis; spermidine from putrescine: step 1/1. Functionally, catalyzes the irreversible transfer of a propylamine group from the amino donor S-adenosylmethioninamine (decarboxy-AdoMet) to putrescine (1,4-diaminobutane) to yield spermidine. The polypeptide is Polyamine aminopropyltransferase (Halorhodospira halophila (strain DSM 244 / SL1) (Ectothiorhodospira halophila (strain DSM 244 / SL1))).